The chain runs to 131 residues: Glycine cleavage system H protein (131 aa).

One can recognise a Lipoyl-binding domain in the interval 24-106 (TVTIGITDHA…YEDGWIIKLK (83 aa)). At Lys-65 the chain carries N6-lipoyllysine.

This sequence belongs to the GcvH family. The glycine cleavage system is composed of four proteins: P, T, L and H. Requires (R)-lipoate as cofactor.

The glycine cleavage system catalyzes the degradation of glycine. The H protein shuttles the methylamine group of glycine from the P protein to the T protein. This is Glycine cleavage system H protein from Chromohalobacter salexigens (strain ATCC BAA-138 / DSM 3043 / CIP 106854 / NCIMB 13768 / 1H11).